The following is a 353-amino-acid chain: Photosystem II D2 protein (353 aa).

Threonine 2 carries the N-acetylthreonine modification. Residue threonine 2 is modified to Phosphothreonine. Residues 41 to 61 (CAYFALGGWFTGTTFVTSWYT) traverse the membrane as a helical segment. Position 118 (histidine 118) interacts with chlorophyll a. A helical membrane pass occupies residues 125–141 (GFMLRQFELARSVQLRP). Pheophytin a-binding residues include glutamine 130 and asparagine 143. The helical transmembrane segment at 153 to 166 (VFVSVFLIYPLGQS) threads the bilayer. Histidine 198 provides a ligand contact to chlorophyll a. The chain crosses the membrane as a helical span at residues 208–228 (AALLCAIHGATVENTLFEDGD). A plastoquinone contacts are provided by histidine 215 and phenylalanine 262. Histidine 215 is a binding site for Fe cation. A Fe cation-binding site is contributed by histidine 269. The helical transmembrane segment at 279–295 (GLWMSAIGVVGLALNLR) threads the bilayer.

It belongs to the reaction center PufL/M/PsbA/D family. In terms of assembly, PSII is composed of 1 copy each of membrane proteins PsbA, PsbB, PsbC, PsbD, PsbE, PsbF, PsbH, PsbI, PsbJ, PsbK, PsbL, PsbM, PsbT, PsbX, PsbY, PsbZ, Psb30/Ycf12, at least 3 peripheral proteins of the oxygen-evolving complex and a large number of cofactors. It forms dimeric complexes. The D1/D2 heterodimer binds P680, chlorophylls that are the primary electron donor of PSII, and subsequent electron acceptors. It shares a non-heme iron and each subunit binds pheophytin, quinone, additional chlorophylls, carotenoids and lipids. There is also a Cl(-1) ion associated with D1 and D2, which is required for oxygen evolution. The PSII complex binds additional chlorophylls, carotenoids and specific lipids. is required as a cofactor.

The protein resides in the plastid. The protein localises to the chloroplast thylakoid membrane. It catalyses the reaction 2 a plastoquinone + 4 hnu + 2 H2O = 2 a plastoquinol + O2. Functionally, photosystem II (PSII) is a light-driven water:plastoquinone oxidoreductase that uses light energy to abstract electrons from H(2)O, generating O(2) and a proton gradient subsequently used for ATP formation. It consists of a core antenna complex that captures photons, and an electron transfer chain that converts photonic excitation into a charge separation. The D1/D2 (PsbA/PsbD) reaction center heterodimer binds P680, the primary electron donor of PSII as well as several subsequent electron acceptors. D2 is needed for assembly of a stable PSII complex. In Saccharum hybrid (Sugarcane), this protein is Photosystem II D2 protein.